Consider the following 698-residue polypeptide: Ion-translocating oxidoreductase complex subunit C (698 aa).

4Fe-4S ferredoxin-type domains lie at 366 to 397 (TEMGLSEPEQSCIRCGLCVDACPAGLLPQQLY) and 407 to 436 (KARNHNLFDCIECGACAYVCPSNIPLVQYY). 8 residues coordinate [4Fe-4S] cluster: Cys377, Cys380, Cys383, Cys387, Cys416, Cys419, Cys422, and Cys426.

It belongs to the 4Fe4S bacterial-type ferredoxin family. RnfC subfamily. In terms of assembly, the complex is composed of six subunits: RnfA, RnfB, RnfC, RnfD, RnfE and RnfG. Requires [4Fe-4S] cluster as cofactor.

Its subcellular location is the cell inner membrane. In terms of biological role, part of a membrane-bound complex that couples electron transfer with translocation of ions across the membrane. The polypeptide is Ion-translocating oxidoreductase complex subunit C (Yersinia pseudotuberculosis serotype O:3 (strain YPIII)).